The following is a 475-amino-acid chain: MSETFSPNLTFTEGFVLGQASFLIILLLFIRYVVFSPSEQIDHEGWRKRRAERADLLSNHTPPPLSNLLSKTSYDMSIHPAESSDWVNVLLAQILQGYRNDLLSEGGEEGARQRIEGWLNPKGENLSWLDPIDVTSLSLGTSYPLLSNARIRPADGQGRLRAEIDVDYLDSLSMTLSTAVLVNFPKPRFAVLPVTLGVELVSIGGTMSVQLHEPIEDRQHIHVNLLPDFHLNLKVTSLLGSRAKLQDIPKLEQLIVSRLRNLVQDRFVHPNHISLALPRILSPSVSSTPILEGLGEGAVDAMKDAVSDGMKRMVEDFMGENPVEGALNGQGEEQWLDDDFPPTPLVQPPGTFPTLSVSSRQSHRQSLPPSRPQSTTQGQPQLFYRRPLIHPTQSYPHYNTYTLDPQIPHSVSYRHPPRGSHVHNPPETPVPQRPSHGQGRMSTTSSLTPSQSQSQFRFRGQFASGVTPGQVGTSR.

The Lumenal segment spans residues 1–14 (MSETFSPNLTFTEG). Residues 15–35 (FVLGQASFLIILLLFIRYVVF) form a helical membrane-spanning segment. Topologically, residues 36-475 (SPSEQIDHEG…VTPGQVGTSR (440 aa)) are cytoplasmic. The region spanning 80-278 (PAESSDWVNV…HPNHISLALP (199 aa)) is the SMP-LTD domain. 2 disordered regions span residues 321–381 (NPVE…GQPQ) and 394–475 (SYPH…GTSR). Positions 341 to 351 (PPTPLVQPPGT) are enriched in pro residues. 2 stretches are compositionally biased toward polar residues: residues 353–380 (PTLS…QGQP) and 394–403 (SYPHYNTYTL). Residues 442–464 (STTSSLTPSQSQSQFRFRGQFAS) show a composition bias toward low complexity.

Belongs to the MMM1 family. In terms of assembly, homodimer. Component of the ER-mitochondria encounter structure (ERMES) or MDM complex, composed of MMM1, MDM10, MDM12 and MDM34. An MMM1 homodimer associates with one molecule of MDM12 on each side in a pairwise head-to-tail manner, and the SMP-LTD domains of MMM1 and MDM12 generate a continuous hydrophobic tunnel for phospholipid trafficking.

The protein resides in the endoplasmic reticulum membrane. Functionally, component of the ERMES/MDM complex, which serves as a molecular tether to connect the endoplasmic reticulum (ER) and mitochondria. Components of this complex are involved in the control of mitochondrial shape and protein biogenesis, and function in nonvesicular lipid trafficking between the ER and mitochondria. The MDM12-MMM1 subcomplex functions in the major beta-barrel assembly pathway that is responsible for biogenesis of all outer membrane beta-barrel proteins, and acts in a late step after the SAM complex. The MDM10-MDM12-MMM1 subcomplex further acts in the TOM40-specific pathway after the action of the MDM12-MMM1 complex. Essential for establishing and maintaining the structure of mitochondria and maintenance of mtDNA nucleoids. The sequence is that of Maintenance of mitochondrial morphology protein 1 from Cryptococcus neoformans var. neoformans serotype D (strain B-3501A) (Filobasidiella neoformans).